Consider the following 59-residue polypeptide: Large ribosomal subunit protein bL32 (59 aa).

The interval 1 to 20 (MAVQQNKKSKSKKGMRRSHD) is disordered. A compositionally biased stretch (basic residues) spans 7–19 (KKSKSKKGMRRSH).

This sequence belongs to the bacterial ribosomal protein bL32 family.

This is Large ribosomal subunit protein bL32 from Nitratidesulfovibrio vulgaris (strain DSM 19637 / Miyazaki F) (Desulfovibrio vulgaris).